The chain runs to 881 residues: MMKELHPELRENVRLLGELLGQSIRYHLGDEIFNKIEKIRIAAKADRNAEISQRKQLKEVLSGLNDEELAPVARAFNQFLNLTNIAEQYHIVRRRAPASELVDNRLDTIEVVFDRLIGQGVSKDKFFAQLADLNLEFVLTAHPTEITRRTLIQKYDQISECLESLDRSDLLDEEYAKIVERLRRLITEAWHTDEIRYERPTAVDEAKWGFAVIENSLWQAVPDFMRQMDAALLERFGEGLPINVNPVRFASWMGGDRDGNPNVTSEVTREVFLLSRWMAADLYLRDIEALRSELSMTACNGELARASGQSREPYRKILAKLRSRLEATRAWAAEALDSTKKPAAEVLLNNAELIEPLMVCYRSLRDCGMEVIANGPLLDVIRRAQCFGLQLVRLDIRQDSERHSDVMKEICAYLGIGDYSQWTEEEKQAFLIRELEGRRPLLPKEWPASAEAREVLDTCRVVAMQPPEGLASYVISMASDPSDVLTVILLLRESGMRHHIPIAPLFETLSDLQGAADSIGRLLDLPWYREYIGGKQEVMIGYSDSAKDAGQMAAAWAQYQAQEALVKVAAKHDVKLTLFHGRGGTVGRGGGPANRAILSQPPGSVAGNFRITEQGEMIRFKFGQPKVAKQSFNLYLGAVLEASLVPPPEPEPAWREMMDKLSHLAVNSYREVVRERPGFVEYFRSATPEQELGKLALGSRPARRKASGGVESLRAIPWIFAWTQMRLMLPAWLGSDTALQTAVDDGGADTLKAMLTGWPFFETHVDMLEMVLSKVDPEIARFYEERLVKPELHPLGDELRRRAGCAVRLINELKGQDELLLDNPVFMHSLQVRNPYTDPLHFLQVELLVRDRAEGETNKETVEKALKVTMAGVAAGMRNTG.

Active-site residues include H142 and K547.

This sequence belongs to the PEPCase type 1 family. Mg(2+) is required as a cofactor.

It carries out the reaction oxaloacetate + phosphate = phosphoenolpyruvate + hydrogencarbonate. Functionally, forms oxaloacetate, a four-carbon dicarboxylic acid source for the tricarboxylic acid cycle. In Hahella chejuensis (strain KCTC 2396), this protein is Phosphoenolpyruvate carboxylase.